A 396-amino-acid chain; its full sequence is ATP phosphoribosyltransferase regulatory subunit (396 aa).

The protein belongs to the class-II aminoacyl-tRNA synthetase family. HisZ subfamily. In terms of assembly, heteromultimer composed of HisG and HisZ subunits.

The protein localises to the cytoplasm. It participates in amino-acid biosynthesis; L-histidine biosynthesis; L-histidine from 5-phospho-alpha-D-ribose 1-diphosphate: step 1/9. Required for the first step of histidine biosynthesis. May allow the feedback regulation of ATP phosphoribosyltransferase activity by histidine. This chain is ATP phosphoribosyltransferase regulatory subunit, found in Cellvibrio japonicus (strain Ueda107) (Pseudomonas fluorescens subsp. cellulosa).